The following is a 1013-amino-acid chain: MSVFDLPRLHFAGTATTRLPTGPRNGLVDLSTHSVVMDGERFPASRPAAEYHAYLDRVGGKGTAFAGNGYFAIDAGITAVERAAGEVDTGDLLVGRAVDVWGHYNEYLATTFNRARIFDVDPSSSWTSTVMIGQFGFGRLGRSHDVGYVFTGGVHGMQPPRWHEDGRVLHQFTVPAGEDMTWFGSAADSPAAARLRELVESGEADGLVVQLALSDAGPAPMPHAQQWRLRGTIAPWHAGEPRTCPAGRLLTPHNLTADLRGDHVSLNLISFRPPTGISGLELRTADTDRFIARVPADDPHGVVTVPAAEGGDEALCVVGTTAAGERIVVSREREVTVHVDDASVFLEHPRGPGDSDQDAEIAVRTYVRGEPAAATIHIGQYFNPRAFPLDEHATAASATPEDLDVVALCVDGTRWSRHCVISTDENGDGRFLLRGARPGATRLLLSAEGATPFDGLTAAAAYDNDDSLGLWSGLASVAVRVLPDHWWMDDIPRDKVTFDLLYREVFAFYELLYSFMGEEVFSLADRFRVETHPRLIWQMCDPRNRAKTYYMPPTRDLTGPQARLLLAYLRAQNSDVVVPVIEPSHTRSGTPISTRTDLVRALRHGVAIELAVMLQYLYAAFSIPTHGAGQELVSRGDWTPEQLRLMCGDGGETTDGGVRGSLLGVAREEMIHFLVVNNVLMAVGEPFHVPDLDFGTINDTLMVPLDFSLEALGLGSVQRFIQIEQPEGLTGAVRLGDLPVPVREAEDFHYASLSELYGDIREGLQRVPGLFLVERGRGGGEHHLFLRESVNAVHPDYQLEVDDLSSALFAIDFVTEQGEGHVLTDEDTGEESHYDTFVRVADLLMKERLTAADTRRAQWSPAYPVARNPTVHGGGQSKELVTSPVARELMVLFNKSYFMMLQLMVQHFGGSPDASLRRSKLMNAAIDVMTGVMRPLAELLVTVPSGRHGRTAGPSFELDEKPAFIPRADVARRAISLRFRHLAESARTCALVPDKVVRNLDFLADQFATEGPR.

Belongs to the RebD family. As to quaternary structure, homodimer. Heme is required as a cofactor.

The catalysed reaction is 2 3-(7-chloroindol-3-yl)-2-iminopropanoate + H2O2 = dichlorochromopyrrolate + NH4(+) + 2 H2O + H(+). It carries out the reaction 2 2-iminio-3-(indol-3-yl)propanoate + H2O2 = chromopyrrolate + NH4(+) + 2 H2O + H(+). It catalyses the reaction 2 H2O2 = O2 + 2 H2O. Involved in the biosynthesis of the indolocarbazole antitumor agent rebeccamycin. Catalyzes the hydrogen peroxide-dependent dimerization of two L-tryptophan-derived molecules (imine form of indole 3-pyruvate (IPA)), to form dichlorochromopyrrolic acid (CPA), the precursor for the six-ring bisindolopyrrolocarbazole scaffold of the rebeccamycin. The hydrogen peroxide is provided together with iminoindolpropanoate by RebO. Due to the instability of indole 3-pyruvate (IPA), which is hydrolyzed in solution and exits in equilibrium with the predominant ketone form of IPA, the concerted functioning of the RebO/RebD system appears to prevent the buildup of significant amounts of IPA and its imine in solution, effectively shepherding the imine further down the biosynthetic chain. The protein is Dichlorochromopyrrolate synthase (rebD) of Lentzea aerocolonigenes (Lechevalieria aerocolonigenes).